The chain runs to 268 residues: Homeobox protein Hox-C4a (268 aa).

Residues 70-129 (PEPDTQRGHGLPHAGHLLGKGQSASCEPPPLPLSPATPSAASSACNQATPEHPNSSASAK) form a disordered region. 2 stretches are compositionally biased toward low complexity: residues 77–95 (GHGL…SASC) and 105–114 (ATPSAASSAC). Residues 115–128 (NQATPEHPNSSASA) are compositionally biased toward polar residues. The short motif at 133–138 (VYPWMK) is the Antp-type hexapeptide element. The homeobox DNA-binding region spans 154–213 (PKRSRTAYTRQQVLELEKEFHYNRYLTRRRRIEIAHSLVLSERQIKIWFQNRRMKWKKDH). The tract at residues 212–268 (DHRLPNTKVRSSSSTGISSGSNTSSAAGVVAAASTTNTMSASEDLSGTERGEDITRL) is disordered. The segment covering 222–253 (SSSSTGISSGSNTSSAAGVVAAASTTNTMSAS) has biased composition (low complexity). Positions 258–268 (GTERGEDITRL) are enriched in basic and acidic residues.

Belongs to the Antp homeobox family. Deformed subfamily.

It is found in the nucleus. Sequence-specific transcription factor which is part of a developmental regulatory system that provides cells with specific positional identities on the anterior-posterior axis. This is Homeobox protein Hox-C4a (hoxc4a) from Danio rerio (Zebrafish).